Here is a 152-residue protein sequence, read N- to C-terminus: Nucleoside diphosphate kinase A 1 (152 aa).

6 residues coordinate ATP: Lys12, Phe60, Arg88, Thr94, Arg105, and Asn115. The Pros-phosphohistidine intermediate role is filled by His118.

This sequence belongs to the NDK family. In terms of assembly, homohexamer. Mg(2+) serves as cofactor. In terms of processing, the N-terminus is blocked.

It localises to the cytoplasm. The protein localises to the cell membrane. Its subcellular location is the nucleus. The catalysed reaction is a 2'-deoxyribonucleoside 5'-diphosphate + ATP = a 2'-deoxyribonucleoside 5'-triphosphate + ADP. It carries out the reaction a ribonucleoside 5'-diphosphate + ATP = a ribonucleoside 5'-triphosphate + ADP. With respect to regulation, autophosphorylation at His-118 increases serine/threonine protein kinase activity of the enzyme. Interaction with the SET complex inhibits exonuclease activity. Major role in the synthesis of nucleoside triphosphates other than ATP. Possesses nucleoside-diphosphate kinase, serine/threonine-specific protein kinase, geranyl and farnesyl pyrophosphate kinase, histidine protein kinase and 3'-5' exonuclease activities. Involved in cell proliferation, differentiation and development, signal transduction, G protein-coupled receptor endocytosis, and gene expression. Required for neural development including neural patterning and cell fate determination. In Bos taurus (Bovine), this protein is Nucleoside diphosphate kinase A 1 (NME1-1).